Here is a 239-residue protein sequence, read N- to C-terminus: MTLALQYKRILLKVSGEALMGGQSFGIDVFVADRIATDIAEVRAMGVEVAIVIGGGNIFRGVAVASHGGDRVTGDHMGMLATAINSLALRTSLTKLGVETVVLSAVAMPQICESFSQRKAIGYMNQGKVVIFAGGTGNPFFTTDSAATLRAAEIGADVLLKGTQVDGIYSADPKIDPTAKRFDQLTHVEILQWGLSVMDTTAVTLARENNVPIIVYSIHEKGGLAKVLNGTGRFTMVSE.

13–16 (KVSG) contacts ATP. Gly55 contacts UMP. 2 residues coordinate ATP: Gly56 and Arg60. UMP-binding positions include Asp75 and 136 to 143 (TGNPFFTT). ATP contacts are provided by Thr163, Gln164, Tyr169, and Asp172.

Belongs to the UMP kinase family. In terms of assembly, homohexamer.

It is found in the cytoplasm. It carries out the reaction UMP + ATP = UDP + ADP. It participates in pyrimidine metabolism; CTP biosynthesis via de novo pathway; UDP from UMP (UMPK route): step 1/1. Its activity is regulated as follows. Inhibited by UTP. In terms of biological role, catalyzes the reversible phosphorylation of UMP to UDP. The chain is Uridylate kinase from Bartonella quintana (strain Toulouse) (Rochalimaea quintana).